Reading from the N-terminus, the 137-residue chain is SMR2 protein (137 aa).

The N-terminal stretch at 1-18 (MLVVLLTAALLALSSAQN) is a signal peptide. A disordered region spans residues 14–113 (SSAQNTDEEV…LHHRENLRPQ (100 aa)). Residues 75 to 85 (QQQQPLPVENQ) show a composition bias toward low complexity. Residues 99–110 (PPPETLHHRENL) are compositionally biased toward basic and acidic residues.

The protein resides in the secreted. Its function is as follows. Unknown, male-specific function. The polypeptide is SMR2 protein (Smr2) (Rattus norvegicus (Rat)).